Reading from the N-terminus, the 90-residue chain is Large ribosomal subunit protein bL27 (90 aa).

The segment at Met1–Leu21 is disordered.

This sequence belongs to the bacterial ribosomal protein bL27 family.

In Metamycoplasma arthritidis (strain 158L3-1) (Mycoplasma arthritidis), this protein is Large ribosomal subunit protein bL27.